Reading from the N-terminus, the 336-residue chain is GTP 3',8-cyclase (336 aa).

Positions 17–238 constitute a Radical SAM core domain; the sequence is GFSRRFHYLR…WTQQNRNLTD (222 aa). Arginine 26 is a GTP binding site. Positions 33 and 37 each coordinate [4Fe-4S] cluster. An S-adenosyl-L-methionine-binding site is contributed by tyrosine 39. Cysteine 40 provides a ligand contact to [4Fe-4S] cluster. A GTP-binding site is contributed by arginine 75. Glycine 79 contributes to the S-adenosyl-L-methionine binding site. Threonine 106 contributes to the GTP binding site. Serine 130 serves as a coordination point for S-adenosyl-L-methionine. Position 167 (lysine 167) interacts with GTP. Residue methionine 201 coordinates S-adenosyl-L-methionine. [4Fe-4S] cluster contacts are provided by cysteine 264 and cysteine 267. Residue 269-271 coordinates GTP; the sequence is RLR. Cysteine 281 contacts [4Fe-4S] cluster.

This sequence belongs to the radical SAM superfamily. MoaA family. Monomer and homodimer. It depends on [4Fe-4S] cluster as a cofactor.

The catalysed reaction is GTP + AH2 + S-adenosyl-L-methionine = (8S)-3',8-cyclo-7,8-dihydroguanosine 5'-triphosphate + 5'-deoxyadenosine + L-methionine + A + H(+). It functions in the pathway cofactor biosynthesis; molybdopterin biosynthesis. Catalyzes the cyclization of GTP to (8S)-3',8-cyclo-7,8-dihydroguanosine 5'-triphosphate. In Tolumonas auensis (strain DSM 9187 / NBRC 110442 / TA 4), this protein is GTP 3',8-cyclase.